The sequence spans 645 residues: Macrolide export ATP-binding/permease protein MacB (645 aa).

The ABC transporter domain maps to 6–244; the sequence is IELKDVTRYY…EAPQYRYARK (239 aa). 42 to 49 is an ATP binding site; it reads GQSGSGKS. Transmembrane regions (helical) follow at residues 271–291, 520–540, 577–597, and 608–628; these read ALTL…LAIG, FSIL…IGVM, VVGG…VFII, and PLPA…FGLL.

The protein belongs to the ABC transporter superfamily. Macrolide exporter (TC 3.A.1.122) family. As to quaternary structure, homodimer.

It localises to the cell inner membrane. Non-canonical ABC transporter that contains transmembrane domains (TMD), which form a pore in the inner membrane, and an ATP-binding domain (NBD), which is responsible for energy generation. Confers resistance against macrolides. The protein is Macrolide export ATP-binding/permease protein MacB of Hyphomonas neptunium (strain ATCC 15444).